The chain runs to 417 residues: UDP-N-acetylglucosamine 1-carboxyvinyltransferase (417 aa).

Residue lysine 22–asparagine 23 coordinates phosphoenolpyruvate. Arginine 91 serves as a coordination point for UDP-N-acetyl-alpha-D-glucosamine. Cysteine 115 (proton donor) is an active-site residue. Cysteine 115 carries the post-translational modification 2-(S-cysteinyl)pyruvic acid O-phosphothioketal. UDP-N-acetyl-alpha-D-glucosamine is bound by residues arginine 120 to leucine 124, aspartate 304, and isoleucine 326.

The protein belongs to the EPSP synthase family. MurA subfamily.

It is found in the cytoplasm. It carries out the reaction phosphoenolpyruvate + UDP-N-acetyl-alpha-D-glucosamine = UDP-N-acetyl-3-O-(1-carboxyvinyl)-alpha-D-glucosamine + phosphate. The protein operates within cell wall biogenesis; peptidoglycan biosynthesis. Cell wall formation. Adds enolpyruvyl to UDP-N-acetylglucosamine. The polypeptide is UDP-N-acetylglucosamine 1-carboxyvinyltransferase (Nitratidesulfovibrio vulgaris (strain DP4) (Desulfovibrio vulgaris)).